The sequence spans 1247 residues: F-box/WD repeat-containing protein A (1247 aa).

The 214-residue stretch at 1–214 (MQYVNGNDIS…PATVSGRLAK (214 aa)) folds into the START domain. Disordered regions lie at residues 484-514 (GNKD…DNII) and 552-576 (QQPQ…KEIK). Over residues 552-566 (QQPQQQQQQPQEQQQ) the composition is skewed to low complexity. In terms of domain architecture, F-box spans 631–677 (NSGFDNLPEEVVQIIFSNLSAINIVNLSLVCKRFKMATDSPILWKNL). 2 disordered regions span residues 697 to 744 (SNLS…QQQQ) and 833 to 856 (GQES…KRDN). Composition is skewed to low complexity over residues 707–719 (NSNS…GSSS) and 726–744 (QQQN…QQQQ). Positions 833–846 (GQESPINKNSSDNP) are enriched in polar residues. WD repeat units follow at residues 895–934 (GHNR…GDYE), 945–984 (DHTQ…IEVI), 988–1025 (RPTN…LLWN), 1029–1073 (AHTK…CINT), 1076–1114 (GHSY…TFIS), 1119–1158 (KHTG…LSNI), and 1218–1247 (NHES…RWDF).

Component of an SCF complex including at least culA. Formation of this complex appears to require activity of the MAP kinase erk2. Interacts with regA.

Functionally, substrate recognition component of a SCF (SKP1-CUL1-F-box protein) E3 ubiquitin-protein ligase complex which mediates the ubiquitination and subsequent proteasomal degradation of target proteins. May target the cAMP phosphodiesterase regA for degradation leading to an increase in cAMP and PKA activity. Promotes development of prestalk cells as opposed to prespores within the developing fruiting body. Required for culmination and fruiting body development. The polypeptide is F-box/WD repeat-containing protein A (fbxA) (Dictyostelium discoideum (Social amoeba)).